The following is a 213-amino-acid chain: Probable thymidylate kinase 2 (213 aa).

G10 to S17 is an ATP binding site.

It belongs to the thymidylate kinase family.

It carries out the reaction dTMP + ATP = dTDP + ADP. The sequence is that of Probable thymidylate kinase 2 (tmk2) from Saccharolobus solfataricus (strain ATCC 35092 / DSM 1617 / JCM 11322 / P2) (Sulfolobus solfataricus).